A 311-amino-acid polypeptide reads, in one-letter code: Aspartate carbamoyltransferase catalytic subunit (311 aa).

Residues Arg-58 and Thr-59 each contribute to the carbamoyl phosphate site. Lys-86 provides a ligand contact to L-aspartate. Residues Arg-108, His-136, and Gln-139 each contribute to the carbamoyl phosphate site. Residues Arg-169 and Arg-223 each coordinate L-aspartate. Residues Gly-264 and Pro-265 each contribute to the carbamoyl phosphate site.

Belongs to the aspartate/ornithine carbamoyltransferase superfamily. ATCase family. As to quaternary structure, heterododecamer (2C3:3R2) of six catalytic PyrB chains organized as two trimers (C3), and six regulatory PyrI chains organized as three dimers (R2).

The catalysed reaction is carbamoyl phosphate + L-aspartate = N-carbamoyl-L-aspartate + phosphate + H(+). It functions in the pathway pyrimidine metabolism; UMP biosynthesis via de novo pathway; (S)-dihydroorotate from bicarbonate: step 2/3. Functionally, catalyzes the condensation of carbamoyl phosphate and aspartate to form carbamoyl aspartate and inorganic phosphate, the committed step in the de novo pyrimidine nucleotide biosynthesis pathway. This is Aspartate carbamoyltransferase catalytic subunit from Desulfosudis oleivorans (strain DSM 6200 / JCM 39069 / Hxd3) (Desulfococcus oleovorans).